The sequence spans 214 residues: Cytochrome c biogenesis ATP-binding export protein CcmA (214 aa).

Positions 12-214 (LAAHDLAFSR…TRMLTLEVAA (203 aa)) constitute an ABC transporter domain. 44–51 (GDNGAGKT) is a binding site for ATP.

It belongs to the ABC transporter superfamily. CcmA exporter (TC 3.A.1.107) family. The complex is composed of two ATP-binding proteins (CcmA) and two transmembrane proteins (CcmB).

It localises to the cell inner membrane. It carries out the reaction heme b(in) + ATP + H2O = heme b(out) + ADP + phosphate + H(+). Part of the ABC transporter complex CcmAB involved in the biogenesis of c-type cytochromes; once thought to export heme, this seems not to be the case, but its exact role is uncertain. Responsible for energy coupling to the transport system. The sequence is that of Cytochrome c biogenesis ATP-binding export protein CcmA from Xanthomonas axonopodis pv. citri (strain 306).